The primary structure comprises 71 residues: Large ribosomal subunit protein bL31 (71 aa).

Zn(2+)-binding residues include Cys16, Cys18, Cys37, and Cys40.

It belongs to the bacterial ribosomal protein bL31 family. Type A subfamily. As to quaternary structure, part of the 50S ribosomal subunit. Zn(2+) is required as a cofactor.

Binds the 23S rRNA. This is Large ribosomal subunit protein bL31 from Pseudomonas entomophila (strain L48).